A 157-amino-acid polypeptide reads, in one-letter code: Crossover junction endodeoxyribonuclease RuvC (157 aa).

Active-site residues include Asp7, Glu67, and Asp140. Mg(2+)-binding residues include Asp7, Glu67, and Asp140.

It belongs to the RuvC family. Homodimer which binds Holliday junction (HJ) DNA. The HJ becomes 2-fold symmetrical on binding to RuvC with unstacked arms; it has a different conformation from HJ DNA in complex with RuvA. In the full resolvosome a probable DNA-RuvA(4)-RuvB(12)-RuvC(2) complex forms which resolves the HJ. It depends on Mg(2+) as a cofactor.

It localises to the cytoplasm. It carries out the reaction Endonucleolytic cleavage at a junction such as a reciprocal single-stranded crossover between two homologous DNA duplexes (Holliday junction).. Its function is as follows. The RuvA-RuvB-RuvC complex processes Holliday junction (HJ) DNA during genetic recombination and DNA repair. Endonuclease that resolves HJ intermediates. Cleaves cruciform DNA by making single-stranded nicks across the HJ at symmetrical positions within the homologous arms, yielding a 5'-phosphate and a 3'-hydroxyl group; requires a central core of homology in the junction. The consensus cleavage sequence is 5'-(A/T)TT(C/G)-3'. Cleavage occurs on the 3'-side of the TT dinucleotide at the point of strand exchange. HJ branch migration catalyzed by RuvA-RuvB allows RuvC to scan DNA until it finds its consensus sequence, where it cleaves and resolves the cruciform DNA. This is Crossover junction endodeoxyribonuclease RuvC from Rickettsia typhi (strain ATCC VR-144 / Wilmington).